The primary structure comprises 458 residues: UDP-N-acetylmuramoylalanine--D-glutamate ligase (458 aa).

124-130 (GSDGKTT) lines the ATP pocket.

It belongs to the MurCDEF family.

The protein localises to the cytoplasm. The enzyme catalyses UDP-N-acetyl-alpha-D-muramoyl-L-alanine + D-glutamate + ATP = UDP-N-acetyl-alpha-D-muramoyl-L-alanyl-D-glutamate + ADP + phosphate + H(+). Its pathway is cell wall biogenesis; peptidoglycan biosynthesis. Functionally, cell wall formation. Catalyzes the addition of glutamate to the nucleotide precursor UDP-N-acetylmuramoyl-L-alanine (UMA). In Clostridium tetani (strain Massachusetts / E88), this protein is UDP-N-acetylmuramoylalanine--D-glutamate ligase.